A 222-amino-acid polypeptide reads, in one-letter code: Vesicle-associated membrane protein 724 (222 aa).

Over 1–197 the chain is Cytoplasmic; the sequence is MGQESFIYSF…LWYQNMKIKL (197 aa). A Longin domain is found at 10-115; sequence FVARGTMILA…SLNKEFGPVM (106 aa). The 61-residue stretch at 131-191 folds into the v-SNARE coiled-coil homology domain; that stretch reads KLIKVKAQVS…TQVRRKLWYQ (61 aa). A helical; Anchor for type IV membrane protein transmembrane segment spans residues 198-218; sequence VVLGILLLLVLIIWISVCHGF. The Vesicular segment spans residues 219–222; that stretch reads NCTD.

It belongs to the synaptobrevin family. As to expression, expressed in flowers, leaves, stems and roots.

The protein resides in the cell membrane. Its subcellular location is the early endosome membrane. Involved in the targeting and/or fusion of transport vesicles to their target membrane. In Arabidopsis thaliana (Mouse-ear cress), this protein is Vesicle-associated membrane protein 724.